Here is a 290-residue protein sequence, read N- to C-terminus: GTPase Era (290 aa).

The region spanning 2–168 (KVCIISILGR…IEILKEYAYN (167 aa)) is the Era-type G domain. The tract at residues 10–17 (GRPNVGKS) is G1. A GTP-binding site is contributed by 10-17 (GRPNVGKS). The tract at residues 36-40 (QTTRD) is G2. Residues 57–60 (DTPG) are G3. GTP-binding positions include 57–61 (DTPGI) and 118–121 (SKID). The interval 118–121 (SKID) is G4. Positions 147–149 (VSN) are G5. In terms of domain architecture, KH type-2 spans 199 to 275 (LTDELPHSIA…TLNLKVKVSN (77 aa)).

It belongs to the TRAFAC class TrmE-Era-EngA-EngB-Septin-like GTPase superfamily. Era GTPase family. In terms of assembly, monomer.

It is found in the cytoplasm. It localises to the cell membrane. In terms of biological role, an essential GTPase that binds both GDP and GTP, with rapid nucleotide exchange. Plays a role in 16S rRNA processing and 30S ribosomal subunit biogenesis and possibly also in cell cycle regulation and energy metabolism. The polypeptide is GTPase Era (Mycoplasmopsis agalactiae (strain NCTC 10123 / CIP 59.7 / PG2) (Mycoplasma agalactiae)).